Here is a 326-residue protein sequence, read N- to C-terminus: Eukaryotic translation initiation factor 3 subunit I (326 aa).

5 WD repeats span residues 8–47 (GHER…RLGT), 50–89 (GHQG…VIAS), 145–184 (MVES…KVVD), 188–227 (DHAA…CLKT), and 285–326 (GHFG…NIFE).

It belongs to the eIF-3 subunit I family. Component of the eukaryotic translation initiation factor 3 (eIF-3) complex. The eIF-3 complex interacts with pix.

It is found in the cytoplasm. Component of the eukaryotic translation initiation factor 3 (eIF-3) complex, which is involved in protein synthesis of a specialized repertoire of mRNAs and, together with other initiation factors, stimulates binding of mRNA and methionyl-tRNAi to the 40S ribosome. The eIF-3 complex specifically targets and initiates translation of a subset of mRNAs involved in cell proliferation. The chain is Eukaryotic translation initiation factor 3 subunit I from Drosophila grimshawi (Hawaiian fruit fly).